The following is an 88-amino-acid chain: Large ribosomal subunit protein bL27 (88 aa).

Positions 1-13 are enriched in low complexity; sequence MATKKSGGSSSNG. Positions 1–24 are disordered; the sequence is MATKKSGGSSSNGRDSRGRRLGVK.

It belongs to the bacterial ribosomal protein bL27 family.

The chain is Large ribosomal subunit protein bL27 from Ehrlichia ruminantium (strain Gardel).